The sequence spans 380 residues: Cytochrome b (380 aa).

Helical transmembrane passes span 34-54 (FGSL…LLAM), 78-99 (WLIR…FLHI), 114-134 (WNTG…GYVL), and 179-199 (FFAL…IHLT). Heme b contacts are provided by His84 and His98. Heme b is bound by residues His183 and His197. His202 contributes to the a ubiquinone binding site. 4 helical membrane passes run 227-247 (IKDI…ALFS), 289-309 (LGGV…PFLH), 321-341 (LSQT…WIGS), and 348-368 (FIII…ILFP).

This sequence belongs to the cytochrome b family. The cytochrome bc1 complex contains 11 subunits: 3 respiratory subunits (MT-CYB, CYC1 and UQCRFS1), 2 core proteins (UQCRC1 and UQCRC2) and 6 low-molecular weight proteins (UQCRH/QCR6, UQCRB/QCR7, UQCRQ/QCR8, UQCR10/QCR9, UQCR11/QCR10 and a cleavage product of UQCRFS1). This cytochrome bc1 complex then forms a dimer. Heme b serves as cofactor.

The protein localises to the mitochondrion inner membrane. Functionally, component of the ubiquinol-cytochrome c reductase complex (complex III or cytochrome b-c1 complex) that is part of the mitochondrial respiratory chain. The b-c1 complex mediates electron transfer from ubiquinol to cytochrome c. Contributes to the generation of a proton gradient across the mitochondrial membrane that is then used for ATP synthesis. This is Cytochrome b (MT-CYB) from Alectoris chukar (Chukar partridge).